The sequence spans 157 residues: Probable succinate transporter subunit YjjB (157 aa).

Transmembrane regions (helical) follow at residues 8 to 28, 50 to 70, 87 to 107, and 129 to 149; these read FALAQDMILAAIPAVGFAMVF, MILMTSGLNIEWSTFMASMLV, VFTVAAVIPMFPGISAYTAMI, and FLTASSIVGALSIGLSIPGLW.

It belongs to the ThrE exporter (TC 2.A.79) family. The transporter is composed of YjjB and YjjP.

The protein localises to the cell inner membrane. Involved in succinate export with YjjP. Both proteins are required for export. The protein is Probable succinate transporter subunit YjjB of Escherichia coli (strain SE11).